The primary structure comprises 328 residues: Malate dehydrogenase 2 (328 aa).

12–18 lines the NAD(+) pocket; that stretch reads GAAGQIA. Residues Arg-93 and Arg-99 each contribute to the substrate site. NAD(+) is bound by residues Asn-106, Gln-113, and 130 to 132; that span reads VGN. The substrate site is built by Asn-132 and Arg-163. His-188 functions as the Proton acceptor in the catalytic mechanism.

This sequence belongs to the LDH/MDH superfamily. MDH type 2 family.

It carries out the reaction (S)-malate + NAD(+) = oxaloacetate + NADH + H(+). In terms of biological role, catalyzes the reversible oxidation of malate to oxaloacetate. The polypeptide is Malate dehydrogenase 2 (Burkholderia vietnamiensis (strain G4 / LMG 22486) (Burkholderia cepacia (strain R1808))).